Reading from the N-terminus, the 208-residue chain is uncharacterized protein (208 aa).

The next 6 membrane-spanning stretches (helical) occupy residues 5–25 (VIGI…KEAW), 41–61 (MLLI…IAAL), 69–89 (ANGI…LFFL), 123–143 (VLLG…ICGL), 150–170 (VFFF…TIAG), and 176–196 (NKLL…LVIY).

It is found in the cell membrane. This is an uncharacterized protein from Bacillus subtilis (strain 168).